Reading from the N-terminus, the 364-residue chain is 3-methyl-2-oxobutanoate hydroxymethyltransferase 1, mitochondrial (364 aa).

The transit peptide at 1–59 (MMMMMRRAFRHLARQQRRPLSHVPESAVYGGPRPQDVGAAAGAGAGAGATRRVTVTTLR) directs the protein to the mitochondrion. Positions 94 and 133 each coordinate Mg(2+). 3-methyl-2-oxobutanoate is bound by residues 94-95 (DS), D133, and K163. A Mg(2+)-binding site is contributed by E165. E233 serves as the catalytic Proton acceptor.

Belongs to the PanB family. Mg(2+) serves as cofactor.

Its subcellular location is the mitochondrion. It catalyses the reaction 3-methyl-2-oxobutanoate + (6R)-5,10-methylene-5,6,7,8-tetrahydrofolate + H2O = 2-dehydropantoate + (6S)-5,6,7,8-tetrahydrofolate. It participates in cofactor biosynthesis; (R)-pantothenate biosynthesis; (R)-pantoate from 3-methyl-2-oxobutanoate: step 1/2. Functionally, catalyzes the reversible reaction in which hydroxymethyl group from 5,10-methylenetetrahydrofolate is transferred onto alpha-ketoisovalerate to form ketopantoate. The polypeptide is 3-methyl-2-oxobutanoate hydroxymethyltransferase 1, mitochondrial (KPHMT1) (Oryza sativa subsp. japonica (Rice)).